Here is a 168-residue protein sequence, read N- to C-terminus: Repressed By RIM101 protein 2 (168 aa).

The signal sequence occupies residues 1–24 (MRFAFTTVSLSLLLSSLVASDAAS). Asn83 carries N-linked (GlcNAc...) asparagine glycosylation. Positions 111–149 (SGSASGSGSAKSTASAEKSSGSSASASSTAGGSSSKGGV) are disordered. Residue Ser143 is the site of GPI-anchor amidated serine attachment. Positions 144-168 (SSKGGVSELVAPVGAVVGALAVALM) are cleaved as a propeptide — removed in mature form.

It belongs to the SRP1/TIP1 family. The GPI-anchor is attached to the protein in the endoplasmic reticulum and serves to target the protein to the cell surface. There, the glucosamine-inositol phospholipid moiety is cleaved off and the GPI-modified mannoprotein is covalently attached via its lipidless GPI glycan remnant to the 1,6-beta-glucan of the outer cell wall layer.

The protein resides in the secreted. The protein localises to the cell wall. It localises to the membrane. Functionally, probable cell wall protein which may have esterase activity, with a preference for esters of fatty acids from 4 to 16 carbon atoms. The protein is Repressed By RIM101 protein 2 (RBR2) of Candida albicans (strain SC5314 / ATCC MYA-2876) (Yeast).